Here is a 424-residue protein sequence, read N- to C-terminus: MADTKPHLNLAFIGHVDHGKSTLVGRMMYEMGAIDEHIIEQYRKEAAAKGKATFEFAWVMDSLKEERERGVTIDIAHQRFDTDKYYFTVVDCPGHRDFVKNMITGASQADAAVLVVAAPDGVMAQTKEHVFLARTLGVNQLIVAINKMDATEPPYDEKRYNEVKEEVGKLLRMVGYKIDEVPFIPVSAYNGDNVVKHSDRTKWYTGPTVLDALNALKEPQKPVNLPLRIPVQDVYSISGVGTVPVGRVETGVLKKGDKVIFEPAHVSGEVKSIEIHHQEIPEAYPGDNIGWNVRGIGKNDIRRGDVCGHVDNPPTVAKEFTAQIVVLQHPSAISAGYTPVFHCHTAQVACTITEIKAKLDPRTGSVKEQNPAFIKTGDAAIISVRPTKPMVIEKVKEIPQLGRFAIRDMGMTIAAGMCQNVTPR.

Positions 5-223 (KPHLNLAFIG…NALKEPQKPV (219 aa)) constitute a tr-type G domain. Residues 14 to 21 (GHVDHGKS) are G1. 14–21 (GHVDHGKS) serves as a coordination point for GTP. Serine 21 provides a ligand contact to Mg(2+). The segment at 70–74 (GVTID) is G2. A G3 region spans residues 91-94 (DCPG). Residues 91–95 (DCPGH) and 146–149 (NKMD) each bind GTP. The segment at 146–149 (NKMD) is G4. Positions 187–189 (SAY) are G5.

Belongs to the TRAFAC class translation factor GTPase superfamily. Classic translation factor GTPase family. EF-Tu/EF-1A subfamily.

It is found in the cytoplasm. It catalyses the reaction GTP + H2O = GDP + phosphate + H(+). In terms of biological role, GTP hydrolase that promotes the GTP-dependent binding of aminoacyl-tRNA to the A-site of ribosomes during protein biosynthesis. This Methanothrix thermoacetophila (strain DSM 6194 / JCM 14653 / NBRC 101360 / PT) (Methanosaeta thermophila) protein is Elongation factor 1-alpha.